A 392-amino-acid chain; its full sequence is MGTHIDINNLGGDTSRGNESKPLARQSSLYSLTFDELQSTLGEPGKDFGSMNMDELLKNIWTAEDTQAFMTTTSSVAAPGPSGFVPGGNGLQRQGSLTLPRTLSQKTVDEVWKYLNSKEGSNGNTGTDALERQQTLGEMTLEDFLLRAGVVKEDNTQQNENSSSGFYANNGAAGLEFGFGQPNQNSISFNGNNSSMIMNQAPGLGLKVGGTMQQQQQPHQQQLQQPHQRLPPTIFPKQANVTFAAPVNMVNRGLFETSADGPANSNMGGAGGTVTATSPGTSSAENNTWSSPVPYVFGRGRRSNTGLEKVVERRQKRMIKNRESAARSRARKQAYTLELEAEIESLKLVNQDLQKKQAEIMKTHNSELKEFSKQPPLLAKRQCLRRTLTGPW.

Residues 1–22 (MGTHIDINNLGGDTSRGNESKP) form a disordered region. A phosphoserine mark is found at Ser28, Ser50, and Ser96. Thr135 carries the post-translational modification Phosphothreonine. The tract at residues 266–297 (NMGGAGGTVTATSPGTSSAENNTWSSPVPYVF) is disordered. Over residues 274 to 291 (VTATSPGTSSAENNTWSS) the composition is skewed to polar residues. The bZIP domain maps to 311-374 (VERRQKRMIK…NSELKEFSKQ (64 aa)). A basic motif region spans residues 313–332 (RRQKRMIKNRESAARSRARK). The leucine-zipper stretch occupies residues 339-360 (LEAEIESLKLVNQDLQKKQAEI).

The protein belongs to the bZIP family. ABI5 subfamily. In terms of assembly, DNA-binding heterodimer. Interacts with ABI3 and the AFP proteins AFP1, AFP2, AFP3 and AFP4. In terms of processing, phosphorylated by CPK4, CPK11, SRK2D and SRK2I in vitro.

The protein localises to the nucleus. Binds to the ABA-responsive element (ABRE). Could participate in abscisic acid-regulated gene expression. This Arabidopsis thaliana (Mouse-ear cress) protein is ABSCISIC ACID-INSENSITIVE 5-like protein 4 (ABF1).